Consider the following 4690-residue polypeptide: Nonribosomal peptide synthetase sidN (4690 aa).

An adenylation 1 region spans residues 238 to 656; sequence ARVRENPGRI…LGRLSSDQIK (419 aa). In terms of domain architecture, Carrier 1 spans 779–856; it reads SSSIPMLQSV…DLDTKAQQAL (78 aa). Serine 816 carries the O-(pantetheine 4'-phosphoryl)serine modification. Positions 924 to 1175 are condensation 1; sequence APGGKAFIQH…AFGNTMSDRF (252 aa). The tract at residues 1349–1760 is adenylation 2; the sequence is EFAQKSPNAI…GRKDDLVKIR (412 aa). The 77-residue stretch at 1889–1965 folds into the Carrier 2 domain; the sequence is PAWCIKHRPL…DLINHLSVKR (77 aa). Serine 1926 is modified (O-(pantetheine 4'-phosphoryl)serine). The interval 2001–2285 is condensation 2; it reads PTTVFQDGML…SERLLESQLV (285 aa). Residues 2464–2869 form an adenylation 3 region; sequence TWAKTHPEWK…GRKDEQVKVR (406 aa). The 78-residue stretch at 3002–3079 folds into the Carrier 3 domain; sequence RDLTSIEKQI…ELGRMKNALK (78 aa). Serine 3040 bears the O-(pantetheine 4'-phosphoryl)serine mark. The tract at residues 3121 to 3530 is condensation 3; the sequence is CMPLQEVLVA…QMESLVTSFT (410 aa). A Carrier 4 domain is found at 3564-3637; sequence SVLEQQIRDV…KLATHIQTTS (74 aa). O-(pantetheine 4'-phosphoryl)serine is present on serine 3598. The segment at 3679–4087 is condensation 4; the sequence is VYPLTPLQAG…FESIRKHPDE (409 aa). Residues 4119–4195 enclose the Carrier 5 domain; sequence SAIDQFLDPL…KLCEVAFAKS (77 aa). At serine 4156 the chain carries O-(pantetheine 4'-phosphoryl)serine. Positions 4262-4589 are condensation 5; it reads WVFKAENGLD…FNAHLNILWN (328 aa).

Belongs to the NRP synthetase family.

Its pathway is siderophore biosynthesis. In terms of biological role, nonribosomal peptide synthetase required for the biosynthetis of epichloenin A, an extracellular siderophore that plays a crucial role in endophyte-grass symbioses. SidN assembles epichloenin A by activating and incorporating three trans-anhydromevalonylhydroxyornithine (trans-AMHO), 1 glutamine and 4 glycine moieties. Trans-AMHO is produced from L-ornithine via 2 steps involving a L-ornithine N(5)-monooxygenase and an AHMO-N(5)-transacylase that have still to be identified. The third adenylation domain (A3) of sidN incorporates the hydroxamate groups of the siderophore which forms an octahedral iron complex. The other component amino acids are assembled by sidN adenylation domains A1 and A2. The polypeptide is Nonribosomal peptide synthetase sidN (Epichloe festucae (strain Fl1)).